The chain runs to 104 residues: Ycf49-like protein (104 aa).

Helical transmembrane passes span 6–26 (IPTW…IALV), 41–61 (LAWG…WHFF), and 73–93 (LQAL…WWIY).

The protein belongs to the ycf49 family.

The protein localises to the cell membrane. The sequence is that of Ycf49-like protein from Synechocystis sp. (strain ATCC 27184 / PCC 6803 / Kazusa).